A 393-amino-acid chain; its full sequence is Probable acetyl-CoA acyltransferase (393 aa).

Cys88 serves as the catalytic Acyl-thioester intermediate. Active-site proton acceptor residues include His349 and Cys378.

It belongs to the thiolase-like superfamily. Thiolase family.

It localises to the cytoplasm. It catalyses the reaction 2 acetyl-CoA = acetoacetyl-CoA + CoA. This Staphylococcus aureus (strain MRSA252) protein is Probable acetyl-CoA acyltransferase.